The sequence spans 183 residues: Tetrahydromethanopterin S-methyltransferase subunit A 2 (183 aa).

The Cytoplasmic segment spans residues 1-101; sequence MFLMVEKKPV…TMKALHSNGV (101 aa). Residue His-87 participates in 5-hydroxybenzimidazolylcob(I)amide binding. Residues 102–118 traverse the membrane as a helical segment; sequence DLETGRIIGATGAIPYI. Residues 119–183 lie on the Extracellular side of the membrane; sequence ENMPEEAIER…IGKGDSEENT (65 aa).

This sequence belongs to the MtrA family. The complex is composed of 8 subunits; MtrA, MtrB, MtrC, MtrD, MtrE, MtrF, MtrG and MtrH. It depends on 5-hydroxybenzimidazolylcob(I)amide as a cofactor.

It localises to the cell membrane. The catalysed reaction is 5-methyl-5,6,7,8-tetrahydromethanopterin + coenzyme M + 2 Na(+)(in) = 5,6,7,8-tetrahydromethanopterin + methyl-coenzyme M + 2 Na(+)(out). It participates in one-carbon metabolism; methanogenesis from CO(2); methyl-coenzyme M from 5,10-methylene-5,6,7,8-tetrahydromethanopterin: step 2/2. Part of a complex that catalyzes the formation of methyl-coenzyme M and tetrahydromethanopterin from coenzyme M and methyl-tetrahydromethanopterin. This is an energy-conserving, sodium-ion translocating step. The protein is Tetrahydromethanopterin S-methyltransferase subunit A 2 of Methanothermobacter thermautotrophicus (strain ATCC 29096 / DSM 1053 / JCM 10044 / NBRC 100330 / Delta H) (Methanobacterium thermoautotrophicum).